The chain runs to 319 residues: tRNA U34 carboxymethyltransferase (319 aa).

Carboxy-S-adenosyl-L-methionine-binding positions include K88, W102, K107, G126, 176–177, M192, Y196, and R311; that span reads LE.

This sequence belongs to the class I-like SAM-binding methyltransferase superfamily. CmoB family. As to quaternary structure, homotetramer.

It catalyses the reaction carboxy-S-adenosyl-L-methionine + 5-hydroxyuridine(34) in tRNA = 5-carboxymethoxyuridine(34) in tRNA + S-adenosyl-L-homocysteine + H(+). In terms of biological role, catalyzes carboxymethyl transfer from carboxy-S-adenosyl-L-methionine (Cx-SAM) to 5-hydroxyuridine (ho5U) to form 5-carboxymethoxyuridine (cmo5U) at position 34 in tRNAs. The polypeptide is tRNA U34 carboxymethyltransferase (Pseudomonas syringae pv. tomato (strain ATCC BAA-871 / DC3000)).